The chain runs to 288 residues: MTAMILDGRALAKTLREELRADIQAFVQTTGVTPSLAVVKIAGDPASERYTRTIRKGCEDIGIVFYDHTLPPDTTQAALEETLHALSFDRAVNGILLHLPLPPGFDSNRAIAQIDPHKDVDGVHPYNAGLLAMGQPTMVPNTPAGGMELLLRNHILIKGQRATVVGRSVVVGKPMALLLLQEHATVTIAHSRTKDLASVVREADIVVAATGKPGLITADMVRPGAVVVDFGVNVLGDGKVVGDVDFAGVAEIASAITPVPGGTGPVTNIMLLRNVLRAARLQGVGRGE.

NADP(+) is bound by residues 166-168, serine 191, and valine 232; that span reads GRS.

Belongs to the tetrahydrofolate dehydrogenase/cyclohydrolase family. As to quaternary structure, homodimer.

It catalyses the reaction (6R)-5,10-methylene-5,6,7,8-tetrahydrofolate + NADP(+) = (6R)-5,10-methenyltetrahydrofolate + NADPH. The enzyme catalyses (6R)-5,10-methenyltetrahydrofolate + H2O = (6R)-10-formyltetrahydrofolate + H(+). Its pathway is one-carbon metabolism; tetrahydrofolate interconversion. Its function is as follows. Catalyzes the oxidation of 5,10-methylenetetrahydrofolate to 5,10-methenyltetrahydrofolate and then the hydrolysis of 5,10-methenyltetrahydrofolate to 10-formyltetrahydrofolate. The protein is Bifunctional protein FolD of Roseiflexus castenholzii (strain DSM 13941 / HLO8).